Reading from the N-terminus, the 145-residue chain is MIGLIQRVSRAKVTVADELVGSIGPGLLILLGVEHKDDEASAAKLAQRIANYRVFSDVEDKMNNSVIDAQGEVLVVSQFTLAADTRKGRRPSFSSAATPDQAQHLYQVFCEQMAAQGLPVKTGRFAADMQVELVNDGPVTFELKV.

The short motif at 137–138 (GP) is the Gly-cisPro motif, important for rejection of L-amino acids element.

The protein belongs to the DTD family. Homodimer.

It is found in the cytoplasm. It catalyses the reaction glycyl-tRNA(Ala) + H2O = tRNA(Ala) + glycine + H(+). The enzyme catalyses a D-aminoacyl-tRNA + H2O = a tRNA + a D-alpha-amino acid + H(+). Functionally, an aminoacyl-tRNA editing enzyme that deacylates mischarged D-aminoacyl-tRNAs. Also deacylates mischarged glycyl-tRNA(Ala), protecting cells against glycine mischarging by AlaRS. Acts via tRNA-based rather than protein-based catalysis; rejects L-amino acids rather than detecting D-amino acids in the active site. By recycling D-aminoacyl-tRNA to D-amino acids and free tRNA molecules, this enzyme counteracts the toxicity associated with the formation of D-aminoacyl-tRNA entities in vivo and helps enforce protein L-homochirality. In Idiomarina loihiensis (strain ATCC BAA-735 / DSM 15497 / L2-TR), this protein is D-aminoacyl-tRNA deacylase.